The primary structure comprises 137 residues: Large ribosomal subunit protein uL14 (137 aa).

This sequence belongs to the universal ribosomal protein uL14 family. As to quaternary structure, component of the large ribosomal subunit. Mature ribosomes consist of a small (40S) and a large (60S) subunit. The 40S subunit contains about 32 different proteins and 1 molecule of RNA (18S). The 60S subunit contains 45 different proteins and 3 molecules of RNA (25S, 5.8S and 5S).

It localises to the cytoplasm. In terms of biological role, component of the ribosome, a large ribonucleoprotein complex responsible for the synthesis of proteins in the cell. The small ribosomal subunit (SSU) binds messenger RNAs (mRNAs) and translates the encoded message by selecting cognate aminoacyl-transfer RNA (tRNA) molecules. The large subunit (LSU) contains the ribosomal catalytic site termed the peptidyl transferase center (PTC), which catalyzes the formation of peptide bonds, thereby polymerizing the amino acids delivered by tRNAs into a polypeptide chain. The nascent polypeptides leave the ribosome through a tunnel in the LSU and interact with protein factors that function in enzymatic processing, targeting, and the membrane insertion of nascent chains at the exit of the ribosomal tunnel. This Candida albicans (strain SC5314 / ATCC MYA-2876) (Yeast) protein is Large ribosomal subunit protein uL14.